Reading from the N-terminus, the 118-residue chain is Small ribosomal subunit protein uS13 (118 aa).

Residues 94–118 (SLPLRGQRTKTNARTRKGPRKPIRK) are disordered.

This sequence belongs to the universal ribosomal protein uS13 family. Part of the 30S ribosomal subunit. Forms a loose heterodimer with protein S19. Forms two bridges to the 50S subunit in the 70S ribosome.

In terms of biological role, located at the top of the head of the 30S subunit, it contacts several helices of the 16S rRNA. In the 70S ribosome it contacts the 23S rRNA (bridge B1a) and protein L5 of the 50S subunit (bridge B1b), connecting the 2 subunits; these bridges are implicated in subunit movement. Contacts the tRNAs in the A and P-sites. The sequence is that of Small ribosomal subunit protein uS13 from Shewanella baltica (strain OS223).